A 140-amino-acid chain; its full sequence is L-fucose mutarotase (140 aa).

Catalysis depends on H22, which acts as the Proton donor. Substrate contacts are provided by residues D30, R107, and 129–131 (YGN).

This sequence belongs to the RbsD / FucU family. FucU mutarotase subfamily. In terms of assembly, homodecamer.

It is found in the cytoplasm. It carries out the reaction alpha-L-fucose = beta-L-fucose. The protein operates within carbohydrate metabolism; L-fucose metabolism. Its function is as follows. Involved in the anomeric conversion of L-fucose. The chain is L-fucose mutarotase from Klebsiella pneumoniae (strain 342).